Consider the following 581-residue polypeptide: NADH-quinone oxidoreductase subunit C/D (581 aa).

The segment at Met1–Phe172 is NADH dehydrogenase I subunit C. The interval Glu196–Arg581 is NADH dehydrogenase I subunit D.

In the N-terminal section; belongs to the complex I 30 kDa subunit family. It in the C-terminal section; belongs to the complex I 49 kDa subunit family. NDH-1 is composed of 13 different subunits. Subunits NuoB, CD, E, F, and G constitute the peripheral sector of the complex.

The protein localises to the cell inner membrane. The enzyme catalyses a quinone + NADH + 5 H(+)(in) = a quinol + NAD(+) + 4 H(+)(out). Its function is as follows. NDH-1 shuttles electrons from NADH, via FMN and iron-sulfur (Fe-S) centers, to quinones in the respiratory chain. The immediate electron acceptor for the enzyme in this species is believed to be ubiquinone. Couples the redox reaction to proton translocation (for every two electrons transferred, four hydrogen ions are translocated across the cytoplasmic membrane), and thus conserves the redox energy in a proton gradient. This Rhodopseudomonas palustris (strain HaA2) protein is NADH-quinone oxidoreductase subunit C/D.